The primary structure comprises 214 residues: Large ribosomal subunit protein uL3 (214 aa).

Residues 133-153 are disordered; sequence GRATHGNSRSHNVPGSIGMAQ. An N5-methylglutamine modification is found at glutamine 153.

The protein belongs to the universal ribosomal protein uL3 family. Part of the 50S ribosomal subunit. Forms a cluster with proteins L14 and L19. Post-translationally, methylated by PrmB.

Its function is as follows. One of the primary rRNA binding proteins, it binds directly near the 3'-end of the 23S rRNA, where it nucleates assembly of the 50S subunit. The protein is Large ribosomal subunit protein uL3 of Cupriavidus metallidurans (strain ATCC 43123 / DSM 2839 / NBRC 102507 / CH34) (Ralstonia metallidurans).